A 609-amino-acid chain; its full sequence is mRNA cap guanine-N(7) methyltransferase (609 aa).

The segment covering 1 to 10 (MASKEEERTG) has biased composition (basic and acidic residues). A disordered region spans residues 1 to 252 (MASKEEERTG…EEDAMRNSQS (252 aa)). Low complexity-rich tracts occupy residues 28–47 (QPVV…ATPT) and 70–87 (PQTT…QQKQ). Residues 148–163 (ANDRPISKRKRLEERH) show a composition bias toward basic and acidic residues. Residues 193 to 205 (PRSPSPPLPPRSP) are compositionally biased toward pro residues. The segment covering 233-247 (RRQEERERALEEDAM) has biased composition (basic and acidic residues). In terms of domain architecture, mRNA cap 0 methyltransferase spans 278 to 590 (SKIKGLRSFN…KYTPLGFTSA (313 aa)). 287-288 (NN) lines the mRNA pocket. S-adenosyl-L-methionine contacts are provided by residues K291, G314, D338, D379, 422–424 (MFA), and Y427.

It belongs to the class I-like SAM-binding methyltransferase superfamily. mRNA cap 0 methyltransferase family.

It localises to the nucleus. It carries out the reaction a 5'-end (5'-triphosphoguanosine)-ribonucleoside in mRNA + S-adenosyl-L-methionine = a 5'-end (N(7)-methyl 5'-triphosphoguanosine)-ribonucleoside in mRNA + S-adenosyl-L-homocysteine. Responsible for methylating the 5'-cap structure of mRNAs. This chain is mRNA cap guanine-N(7) methyltransferase (abd1), found in Aspergillus niger (strain ATCC MYA-4892 / CBS 513.88 / FGSC A1513).